The following is a 908-amino-acid chain: UPF0182 protein NT01CX_0852 (908 aa).

7 helical membrane passes run 8–28 (IGLFFCIALTVIFLKKIVNVI), 47–67 (FTSVISLFILVFLICFVAIKT), 96–116 (IINALTLIISLFIALNFSLGY), 157–177 (LLSLLILLAVITVIVYMFLNI), 209–229 (LAILGALLLLCISVGYLIKAW), 253–273 (FYIAISIVSIISSIIVAFSIL), and 280–300 (IISCVILIAVLVISERVVSGA).

It belongs to the UPF0182 family.

The protein resides in the cell membrane. This is UPF0182 protein NT01CX_0852 from Clostridium novyi (strain NT).